Consider the following 101-residue polypeptide: DNA-binding protein Fis (101 aa).

Positions 77-96 (QTRAANMLGINRGTLRKKLK) form a DNA-binding region, H-T-H motif.

This sequence belongs to the transcriptional regulatory Fis family. Homodimer.

In terms of biological role, activates ribosomal RNA transcription. Plays a direct role in upstream activation of rRNA promoters. This is DNA-binding protein Fis from Shewanella baltica (strain OS223).